The chain runs to 341 residues: Cysteine-rich with EGF-like domain protein 2 (341 aa).

A signal peptide spans 1–24 (MLLSCSIFRLFCIILLLQLGSIYT). The 43-residue stretch at 136-178 (DCNTCIGGADRPCHGNGKCDGDGTRAGNGKCSCDEGYDGEFCL) folds into the EGF-like domain. 3 cysteine pairs are disulfide-bonded: cysteine 140-cysteine 154, cysteine 148-cysteine 166, and cysteine 168-cysteine 177. N-linked (GlcNAc...) asparagine glycosylation is present at asparagine 190. 2 FU repeats span residues 193–248 (FFLC…DQYC) and 254–308 (SFSC…NQHC). Residues 291–317 (DIDECTEDPASCSDNQHCLNTDGSFSC) form the EGF-like 2; calcium-binding; truncated domain.

It belongs to the CRELD family.

It localises to the secreted. The protein localises to the endoplasmic reticulum. Its function is as follows. Possible role in neuronal acetylcholine receptor transport. The polypeptide is Cysteine-rich with EGF-like domain protein 2 (creld2) (Danio rerio (Zebrafish)).